Here is a 97-residue protein sequence, read N- to C-terminus: Aspartyl/glutamyl-tRNA(Asn/Gln) amidotransferase subunit C (97 aa).

Belongs to the GatC family. In terms of assembly, heterotrimer of A, B and C subunits.

The enzyme catalyses L-glutamyl-tRNA(Gln) + L-glutamine + ATP + H2O = L-glutaminyl-tRNA(Gln) + L-glutamate + ADP + phosphate + H(+). The catalysed reaction is L-aspartyl-tRNA(Asn) + L-glutamine + ATP + H2O = L-asparaginyl-tRNA(Asn) + L-glutamate + ADP + phosphate + 2 H(+). Allows the formation of correctly charged Asn-tRNA(Asn) or Gln-tRNA(Gln) through the transamidation of misacylated Asp-tRNA(Asn) or Glu-tRNA(Gln) in organisms which lack either or both of asparaginyl-tRNA or glutaminyl-tRNA synthetases. The reaction takes place in the presence of glutamine and ATP through an activated phospho-Asp-tRNA(Asn) or phospho-Glu-tRNA(Gln). This is Aspartyl/glutamyl-tRNA(Asn/Gln) amidotransferase subunit C from Clostridium botulinum (strain Eklund 17B / Type B).